The chain runs to 208 residues: Large ribosomal subunit protein bL9 (208 aa).

Positions 161 to 208 are disordered; the sequence is KKRKIEKEVEEGSGTSVDESLKLDSVSDSIDTSGVNSSDKEEENNIIE. The segment covering 186–197 has biased composition (polar residues); it reads VSDSIDTSGVNS.

Belongs to the bacterial ribosomal protein bL9 family.

Its function is as follows. Binds to the 23S rRNA. The polypeptide is Large ribosomal subunit protein bL9 (Ehrlichia canis (strain Jake)).